Consider the following 160-residue polypeptide: 6,7-dimethyl-8-ribityllumazine synthase (160 aa).

Residues F28, 62–64 (ALE), and 86–88 (AVI) contribute to the 5-amino-6-(D-ribitylamino)uracil site. 91–92 (ET) is a binding site for (2S)-2-hydroxy-3-oxobutyl phosphate. Catalysis depends on H94, which acts as the Proton donor. Residue N119 participates in 5-amino-6-(D-ribitylamino)uracil binding. Residue R133 coordinates (2S)-2-hydroxy-3-oxobutyl phosphate.

This sequence belongs to the DMRL synthase family.

The enzyme catalyses (2S)-2-hydroxy-3-oxobutyl phosphate + 5-amino-6-(D-ribitylamino)uracil = 6,7-dimethyl-8-(1-D-ribityl)lumazine + phosphate + 2 H2O + H(+). It functions in the pathway cofactor biosynthesis; riboflavin biosynthesis; riboflavin from 2-hydroxy-3-oxobutyl phosphate and 5-amino-6-(D-ribitylamino)uracil: step 1/2. In terms of biological role, catalyzes the formation of 6,7-dimethyl-8-ribityllumazine by condensation of 5-amino-6-(D-ribitylamino)uracil with 3,4-dihydroxy-2-butanone 4-phosphate. This is the penultimate step in the biosynthesis of riboflavin. The sequence is that of 6,7-dimethyl-8-ribityllumazine synthase from Nitrosospira multiformis (strain ATCC 25196 / NCIMB 11849 / C 71).